A 437-amino-acid polypeptide reads, in one-letter code: Ribosomal protein uS12 methylthiotransferase RimO (437 aa).

One can recognise an MTTase N-terminal domain in the interval 9 to 125 (PAIFLLSLGC…VLAAIGAHYC (117 aa)). Positions 18, 54, 88, 149, 153, and 156 each coordinate [4Fe-4S] cluster. Residues 135–364 (LTPPHYAFLK…MELQESIAAS (230 aa)) enclose the Radical SAM core domain. A TRAM domain is found at 367–434 (RKLEGQTLTV…AYELFGRVGS (68 aa)).

It belongs to the methylthiotransferase family. RimO subfamily. [4Fe-4S] cluster is required as a cofactor.

The protein localises to the cytoplasm. The catalysed reaction is L-aspartate(89)-[ribosomal protein uS12]-hydrogen + (sulfur carrier)-SH + AH2 + 2 S-adenosyl-L-methionine = 3-methylsulfanyl-L-aspartate(89)-[ribosomal protein uS12]-hydrogen + (sulfur carrier)-H + 5'-deoxyadenosine + L-methionine + A + S-adenosyl-L-homocysteine + 2 H(+). In terms of biological role, catalyzes the methylthiolation of an aspartic acid residue of ribosomal protein uS12. The protein is Ribosomal protein uS12 methylthiotransferase RimO of Chlorobaculum parvum (strain DSM 263 / NCIMB 8327) (Chlorobium vibrioforme subsp. thiosulfatophilum).